The sequence spans 131 residues: Arsenate reductase 2 (131 aa).

Catalysis depends on nucleophile residues C10, C82, and C89. 2 cysteine pairs are disulfide-bonded: C10-C82 and C82-C89.

This sequence belongs to the low molecular weight phosphotyrosine protein phosphatase family. Thioredoxin-coupled ArsC subfamily.

The protein localises to the cytoplasm. It catalyses the reaction arsenate + [thioredoxin]-dithiol + H(+) = arsenite + [thioredoxin]-disulfide + H2O. Its function is as follows. Catalyzes the reduction of arsenate [As(V)] to arsenite [As(III)]. The polypeptide is Arsenate reductase 2 (Staphylococcus saprophyticus subsp. saprophyticus (strain ATCC 15305 / DSM 20229 / NCIMB 8711 / NCTC 7292 / S-41)).